A 509-amino-acid polypeptide reads, in one-letter code: Glutamate--tRNA ligase (509 aa).

A 'HIGH' region motif is present at residues 20–30 (PSPTGFPHVGT). Zn(2+) contacts are provided by Cys117, Cys119, Cys144, and His146. Positions 261–265 (KLSKR) match the 'KMSKS' region motif. Lys264 is an ATP binding site.

This sequence belongs to the class-I aminoacyl-tRNA synthetase family. Glutamate--tRNA ligase type 1 subfamily. As to quaternary structure, monomer. Requires Zn(2+) as cofactor.

It is found in the cytoplasm. It catalyses the reaction tRNA(Glu) + L-glutamate + ATP = L-glutamyl-tRNA(Glu) + AMP + diphosphate. Functionally, catalyzes the attachment of glutamate to tRNA(Glu) in a two-step reaction: glutamate is first activated by ATP to form Glu-AMP and then transferred to the acceptor end of tRNA(Glu). This is Glutamate--tRNA ligase from Psychrobacter cryohalolentis (strain ATCC BAA-1226 / DSM 17306 / VKM B-2378 / K5).